The chain runs to 364 residues: MPRPILATIHRPALAHNLARARSAAPDARVWAVVKANAYGHGIEHVFDGLRSADGFALLDLAEARRLRALDWRGPILLLEGCFEARDLELCSRLSLWHVIHCNEQIDMLAAHKTQVPHRVFLKMNSGMNRLGLRPERFRAAWTRLNALPQVDEISLMTHFSDADGPKGIAAQLRAFDAVTHDLPGERSLSNSAGVLRHGDELAARSDWVRPGIVVYGSAPDFPEHSAADWGLQPTMTLSSRIIGVQELAAGDTVGYGSSFTADGPLRIGVVACGYADGYPRHCSTGTPVLVNGVRTRMVGRVSMDMITVDLTPVPDAGMGAEVTLWGRSSGGAVLPIDEVAQTAGTVGYELMCAVAPRVPVMTE.

The active-site Proton acceptor; specific for D-alanine is K35. K35 is subject to N6-(pyridoxal phosphate)lysine. Residue R130 coordinates substrate. Y256 functions as the Proton acceptor; specific for L-alanine in the catalytic mechanism. M304 is a binding site for substrate.

The protein belongs to the alanine racemase family. Pyridoxal 5'-phosphate serves as cofactor.

The enzyme catalyses L-alanine = D-alanine. It participates in amino-acid biosynthesis; D-alanine biosynthesis; D-alanine from L-alanine: step 1/1. Functionally, catalyzes the interconversion of L-alanine and D-alanine. May also act on other amino acids. The sequence is that of Alanine racemase (alr) from Polaromonas sp. (strain JS666 / ATCC BAA-500).